The chain runs to 113 residues: Eukaryotic translation initiation factor 1 (113 aa).

The residue at position 2 (S2) is an N-acetylserine. Phosphoserine occurs at positions 2 and 9.

This sequence belongs to the SUI1 family. As to quaternary structure, component of the 43S pre-initiation complex (43S PIC), which is composed of the 40S ribosomal subunit, EIF1, eIF1A (EIF1AX), eIF3 complex, EIF5 and eIF2-GTP-initiator tRNA complex (eIF2 ternary complex). Interacts with EIF4G1; in specific 5'-UTR length and AUG context. Interacts with EIF5; which in a mutual exclusive interaction associates either with EIF1 or with EIF2S2 on a common binding site. Interacts with RENT2.

It is found in the cytoplasm. In terms of biological role, component of the 43S pre-initiation complex (43S PIC), which binds to the mRNA cap-proximal region, scans mRNA 5'-untranslated region, and locates the initiation codon. Together with eIF1A (EIF1AX), EIF1 facilitates scanning and is essential for start codon recognition on the basis of AUG nucleotide context and location relative to the 5'-cap. Participates to initiation codon selection by influencing the conformation of the 40S ribosomal subunit and the positions of bound mRNA and initiator tRNA; this is possible after its binding to the interface surface of the platform of the 40S ribosomal subunit close to the P-site. Together with eIF1A (EIF1AX), also regulates the opening and closing of the mRNA binding channel, which ensures mRNA recruitment, scanning and the fidelity of initiation codon selection. Continuously monitors and protects against premature and partial base-pairing of codons in the 5'-UTR with the anticodon of initiator tRNA. Together with eIF1A (EIF1AX), acts for ribosomal scanning, promotion of the assembly of 48S complex at the initiation codon (43S PIC becomes 48S PIC after the start codon is reached), and dissociation of aberrant complexes. Interacts with EIF4G1, which in a mutual exclusive interaction associates either with EIF1 or with EIF4E on a common binding site. EIF4G1-EIF1 complex promotes ribosome scanning (on both short and long 5'UTR), leaky scanning (on short 5'UTR) which is the bypass of the initial start codon, and discrimination against cap-proximal AUG. Is probably maintained within the 43S PIC in open conformation thanks to eIF1A-EIF5 interaction. Once the correct start codon is reached, EIF1 is physically excluded from the decoding site, shifting the PIC into the closed conformation and arresting it at the start codon. The sequence is that of Eukaryotic translation initiation factor 1 (Eif1) from Mus musculus (Mouse).